Consider the following 371-residue polypeptide: Histidinol-phosphate aminotransferase (371 aa).

K222 bears the N6-(pyridoxal phosphate)lysine mark.

This sequence belongs to the class-II pyridoxal-phosphate-dependent aminotransferase family. Histidinol-phosphate aminotransferase subfamily. In terms of assembly, homodimer. Requires pyridoxal 5'-phosphate as cofactor.

It catalyses the reaction L-histidinol phosphate + 2-oxoglutarate = 3-(imidazol-4-yl)-2-oxopropyl phosphate + L-glutamate. It participates in amino-acid biosynthesis; L-histidine biosynthesis; L-histidine from 5-phospho-alpha-D-ribose 1-diphosphate: step 7/9. The polypeptide is Histidinol-phosphate aminotransferase (Anoxybacillus flavithermus (strain DSM 21510 / WK1)).